A 365-amino-acid polypeptide reads, in one-letter code: UDP-N-acetylglucosamine--N-acetylmuramyl-(pentapeptide) pyrophosphoryl-undecaprenol N-acetylglucosamine transferase (365 aa).

Residues 17–19 (TGG), Asn-129, Arg-167, Ser-194, Ile-250, 269–274 (ALTVSE), and Gln-295 contribute to the UDP-N-acetyl-alpha-D-glucosamine site.

The protein belongs to the glycosyltransferase 28 family. MurG subfamily.

It localises to the cell inner membrane. It catalyses the reaction di-trans,octa-cis-undecaprenyl diphospho-N-acetyl-alpha-D-muramoyl-L-alanyl-D-glutamyl-meso-2,6-diaminopimeloyl-D-alanyl-D-alanine + UDP-N-acetyl-alpha-D-glucosamine = di-trans,octa-cis-undecaprenyl diphospho-[N-acetyl-alpha-D-glucosaminyl-(1-&gt;4)]-N-acetyl-alpha-D-muramoyl-L-alanyl-D-glutamyl-meso-2,6-diaminopimeloyl-D-alanyl-D-alanine + UDP + H(+). The protein operates within cell wall biogenesis; peptidoglycan biosynthesis. Functionally, cell wall formation. Catalyzes the transfer of a GlcNAc subunit on undecaprenyl-pyrophosphoryl-MurNAc-pentapeptide (lipid intermediate I) to form undecaprenyl-pyrophosphoryl-MurNAc-(pentapeptide)GlcNAc (lipid intermediate II). This is UDP-N-acetylglucosamine--N-acetylmuramyl-(pentapeptide) pyrophosphoryl-undecaprenol N-acetylglucosamine transferase from Shewanella halifaxensis (strain HAW-EB4).